Reading from the N-terminus, the 326-residue chain is N-acetyl-gamma-glutamyl-phosphate reductase (326 aa).

Cys155 is a catalytic residue.

The protein belongs to the NAGSA dehydrogenase family. Type 1 subfamily.

Its subcellular location is the cytoplasm. It carries out the reaction N-acetyl-L-glutamate 5-semialdehyde + phosphate + NADP(+) = N-acetyl-L-glutamyl 5-phosphate + NADPH + H(+). It functions in the pathway amino-acid biosynthesis; L-arginine biosynthesis; N(2)-acetyl-L-ornithine from L-glutamate: step 3/4. Catalyzes the NADPH-dependent reduction of N-acetyl-5-glutamyl phosphate to yield N-acetyl-L-glutamate 5-semialdehyde. This Shewanella baltica (strain OS223) protein is N-acetyl-gamma-glutamyl-phosphate reductase.